A 197-amino-acid polypeptide reads, in one-letter code: Glycerol-3-phosphate acyltransferase (197 aa).

Helical transmembrane passes span 1–21, 50–70, 77–97, 111–131, 137–157, and 158–178; these read MNIL…GFLI, WPAL…VKIA, GLIE…PIWL, MFLA…LIVL, VSLS…FYLG, and KFMH…IWKH.

The protein belongs to the PlsY family. In terms of assembly, probably interacts with PlsX.

Its subcellular location is the cell inner membrane. It catalyses the reaction an acyl phosphate + sn-glycerol 3-phosphate = a 1-acyl-sn-glycero-3-phosphate + phosphate. It functions in the pathway lipid metabolism; phospholipid metabolism. Its function is as follows. Catalyzes the transfer of an acyl group from acyl-phosphate (acyl-PO(4)) to glycerol-3-phosphate (G3P) to form lysophosphatidic acid (LPA). This enzyme utilizes acyl-phosphate as fatty acyl donor, but not acyl-CoA or acyl-ACP. The polypeptide is Glycerol-3-phosphate acyltransferase (Prochlorococcus marinus (strain MIT 9301)).